A 678-amino-acid polypeptide reads, in one-letter code: Glycine--tRNA ligase beta subunit (678 aa).

It belongs to the class-II aminoacyl-tRNA synthetase family. As to quaternary structure, tetramer of two alpha and two beta subunits.

The protein localises to the cytoplasm. It catalyses the reaction tRNA(Gly) + glycine + ATP = glycyl-tRNA(Gly) + AMP + diphosphate. The polypeptide is Glycine--tRNA ligase beta subunit (Streptococcus pneumoniae serotype 19F (strain G54)).